Reading from the N-terminus, the 329-residue chain is Small ribosomal subunit protein RACK1 (329 aa).

7 WD repeats span residues Gly19 to Pro59, Gly68 to Leu107, Gly110 to Leu149, Ala154 to Thr193, Asp196 to Lys235, Glu237 to Glu275, and Pro295 to Ser328.

The protein belongs to the WD repeat G protein beta family. Ribosomal protein RACK1 subfamily.

The chain is Small ribosomal subunit protein RACK1 (gpbB) from Dictyostelium discoideum (Social amoeba).